A 274-amino-acid chain; its full sequence is Ribosomal RNA small subunit methyltransferase A (274 aa).

Residues H15, L17, G42, E64, D89, and N108 each contribute to the S-adenosyl-L-methionine site.

This sequence belongs to the class I-like SAM-binding methyltransferase superfamily. rRNA adenine N(6)-methyltransferase family. RsmA subfamily.

The protein localises to the cytoplasm. It catalyses the reaction adenosine(1518)/adenosine(1519) in 16S rRNA + 4 S-adenosyl-L-methionine = N(6)-dimethyladenosine(1518)/N(6)-dimethyladenosine(1519) in 16S rRNA + 4 S-adenosyl-L-homocysteine + 4 H(+). Functionally, specifically dimethylates two adjacent adenosines (A1518 and A1519) in the loop of a conserved hairpin near the 3'-end of 16S rRNA in the 30S particle. May play a critical role in biogenesis of 30S subunits. The chain is Ribosomal RNA small subunit methyltransferase A from Prochlorococcus marinus (strain MIT 9301).